Here is a 113-residue protein sequence, read N- to C-terminus: UPF0342 protein SMU_782 (113 aa).

This sequence belongs to the UPF0342 family.

The sequence is that of UPF0342 protein SMU_782 from Streptococcus mutans serotype c (strain ATCC 700610 / UA159).